The chain runs to 363 residues: Outer membrane protein P2 (363 aa).

The first 20 residues, 1–20, serve as a signal peptide directing secretion; that stretch reads MKKTLAALIVGAFAASAANA.

It belongs to the Gram-negative porin family. Homotrimer.

Its subcellular location is the cell outer membrane. Functionally, forms pores that allow passive diffusion of small molecules across the outer membrane. The protein is Outer membrane protein P2 (ompP2) of Haemophilus influenzae.